An 80-amino-acid chain; its full sequence is Conotoxin SIVB (80 aa).

The signal sequence occupies residues 1–21 (MGMRMMFTVFLSVVLATTVVS). Residues 22–38 (TPSDRASDGRNAAVHER) constitute a propeptide that is removed on maturation. Q39 carries the post-translational modification Pyrrolidone carboxylic acid. S45 is a glycosylation site (O-linked (HexNAc...) serine). 4-hydroxyproline is present on residues P55, P60, P61, P69, P72, and P75. Residue P75 is modified to Proline amide. The propeptide occupies 76–80 (GRRND).

This sequence belongs to the conotoxin A superfamily. In terms of processing, contains 3 disulfide bonds. O-linked glycan consists of Hex3-HexNAc2 pentasaccharide. In terms of tissue distribution, expressed by the venom duct.

Its subcellular location is the secreted. In terms of biological role, neurotoxin with probable activity on sodium channel. Induces intense repetitive firing of the frog neuromuscular junction, leading to a tetanic contracture in muscle fiber (spastic paralysis). In vivo, shows the same effect as the whole venom when injected on fish prey. In Conus striatus (Striated cone), this protein is Conotoxin SIVB.